A 405-amino-acid chain; its full sequence is Deoxyguanosinetriphosphate triphosphohydrolase-like protein (405 aa).

One can recognise an HD domain in the interval 75 to 219; that stretch reads RLTHTIEVAQ…AAIADDIAYN (145 aa).

Belongs to the dGTPase family. Type 2 subfamily.

The chain is Deoxyguanosinetriphosphate triphosphohydrolase-like protein from Rhizobium leguminosarum bv. trifolii (strain WSM2304).